A 62-amino-acid chain; its full sequence is Large ribosomal subunit protein bL28 (62 aa).

Belongs to the bacterial ribosomal protein bL28 family.

The chain is Large ribosomal subunit protein bL28 from Streptococcus agalactiae serotype Ia (strain ATCC 27591 / A909 / CDC SS700).